We begin with the raw amino-acid sequence, 441 residues long: UDP-N-acetylglucosamine--N-acetylmuramyl-(pentapeptide) pyrophosphoryl-undecaprenol N-acetylglucosamine transferase (441 aa).

UDP-N-acetyl-alpha-D-glucosamine-binding positions include 28-30, Asn-140, Arg-176, Ser-204, Ile-257, and Gln-302; that span reads TGG.

Belongs to the glycosyltransferase 28 family. MurG subfamily.

Its subcellular location is the cell inner membrane. It carries out the reaction di-trans,octa-cis-undecaprenyl diphospho-N-acetyl-alpha-D-muramoyl-L-alanyl-D-glutamyl-meso-2,6-diaminopimeloyl-D-alanyl-D-alanine + UDP-N-acetyl-alpha-D-glucosamine = di-trans,octa-cis-undecaprenyl diphospho-[N-acetyl-alpha-D-glucosaminyl-(1-&gt;4)]-N-acetyl-alpha-D-muramoyl-L-alanyl-D-glutamyl-meso-2,6-diaminopimeloyl-D-alanyl-D-alanine + UDP + H(+). It functions in the pathway cell wall biogenesis; peptidoglycan biosynthesis. Functionally, cell wall formation. Catalyzes the transfer of a GlcNAc subunit on undecaprenyl-pyrophosphoryl-MurNAc-pentapeptide (lipid intermediate I) to form undecaprenyl-pyrophosphoryl-MurNAc-(pentapeptide)GlcNAc (lipid intermediate II). This is UDP-N-acetylglucosamine--N-acetylmuramyl-(pentapeptide) pyrophosphoryl-undecaprenol N-acetylglucosamine transferase from Xanthomonas oryzae pv. oryzae (strain MAFF 311018).